We begin with the raw amino-acid sequence, 283 residues long: ATP phosphoribosyltransferase (283 aa).

The protein belongs to the ATP phosphoribosyltransferase family. Long subfamily. The cofactor is Mg(2+).

The protein localises to the cytoplasm. It carries out the reaction 1-(5-phospho-beta-D-ribosyl)-ATP + diphosphate = 5-phospho-alpha-D-ribose 1-diphosphate + ATP. Its pathway is amino-acid biosynthesis; L-histidine biosynthesis; L-histidine from 5-phospho-alpha-D-ribose 1-diphosphate: step 1/9. Feedback inhibited by histidine. Catalyzes the condensation of ATP and 5-phosphoribose 1-diphosphate to form N'-(5'-phosphoribosyl)-ATP (PR-ATP). Has a crucial role in the pathway because the rate of histidine biosynthesis seems to be controlled primarily by regulation of HisG enzymatic activity. In Nocardia farcinica (strain IFM 10152), this protein is ATP phosphoribosyltransferase.